The primary structure comprises 422 residues: Protein IQ-DOMAIN 5 (422 aa).

A Nuclear localization signal motif is present at residues 23–30 (SKKDENVK). 3 IQ domains span residues 87 to 115 (ENRA…GLVR), 116 to 138 (LQAL…CMQA), and 139 to 164 (LVRV…TSQQ). The calmodulin-binding stretch occupies residues 137–151 (QALVRVQARVRARRV). Residues 269 to 422 (GENGMEQSEN…NSDPIKQRLA (154 aa)) form a disordered region. The segment covering 273 to 308 (MEQSENVPKTQIKSVSKMPNTSNLVSGVSSQMTGPC) has biased composition (polar residues). The span at 310 to 327 (SDGDSSSPGISSSIPVVS) shows a compositional bias: low complexity. Residues 355-371 (NPKERSREPNRSSKERL) show a composition bias toward basic and acidic residues. Polar residues predominate over residues 373-387 (LPNSGKSLGSQSTKA). A compositionally biased stretch (basic and acidic residues) spans 412–422 (RNSDPIKQRLA).

The protein belongs to the IQD family. As to quaternary structure, binds to multiple calmodulin (CaM) in the presence of Ca(2+) and CaM-like proteins. Expressed mostly in vegetative tissues including older parts of the root, cotyledons, leaves and shoot apical meristems (SAM). Present at low levels in pollen, siliques and seeds.

It localises to the nucleus. Its subcellular location is the cytoplasm. The protein resides in the cytoskeleton. The protein localises to the spindle. It is found in the phragmoplast. Functionally, may be involved in cooperative interactions with calmodulins or calmodulin-like proteins. Recruits calmodulin (CaM) calcium sensor proteins to cortical microtubule arrays, thus being a potential scaffold in cellular signaling and trafficking. Binds to microtubules (MTs) and promotes MT assembly and dynamics to modulate pavement cell (PC) morphogenesis via cellulose deposition-dependent anisotropic cell expansion triggered by cellulose synthase complexes (CSCs). May associate with nucleic acids and regulate gene expression at the transcriptional or post-transcriptional level. The polypeptide is Protein IQ-DOMAIN 5 (Arabidopsis thaliana (Mouse-ear cress)).